Reading from the N-terminus, the 227-residue chain is Large ribosomal subunit protein bL25 (227 aa).

The disordered stretch occupies residues 199-227 (AIAEAQSAEAAEEKAEESAEDEKKDGEEA). A compositionally biased stretch (basic and acidic residues) spans 209 to 227 (AEEKAEESAEDEKKDGEEA).

It belongs to the bacterial ribosomal protein bL25 family. CTC subfamily. In terms of assembly, part of the 50S ribosomal subunit; part of the 5S rRNA/L5/L18/L25 subcomplex. Contacts the 5S rRNA. Binds to the 5S rRNA independently of L5 and L18.

In terms of biological role, this is one of the proteins that binds to the 5S RNA in the ribosome where it forms part of the central protuberance. This chain is Large ribosomal subunit protein bL25, found in Methylobacterium radiotolerans (strain ATCC 27329 / DSM 1819 / JCM 2831 / NBRC 15690 / NCIMB 10815 / 0-1).